Reading from the N-terminus, the 496-residue chain is Cytochrome P450 71B12 (496 aa).

Residues 2 to 22 traverse the membrane as a helical segment; the sequence is SLWYIIVAFVFFSSMIIVRII. Heme is bound at residue Cys-436.

It belongs to the cytochrome P450 family. Heme serves as cofactor.

Its subcellular location is the membrane. The sequence is that of Cytochrome P450 71B12 (CYP71B12) from Arabidopsis thaliana (Mouse-ear cress).